Here is a 540-residue protein sequence, read N- to C-terminus: uncharacterized protein (540 aa).

2 consecutive ABC transporter domains span residues 2–252 and 320–537; these read IAVN…KLSQ and LRVE…LTEL. An ATP-binding site is contributed by 34 to 41; sequence GANGAGKS.

This sequence belongs to the ABC transporter superfamily.

This is an uncharacterized protein from Bacillus subtilis (strain 168).